The primary structure comprises 247 residues: Adenosylcobinamide-GDP ribazoletransferase (247 aa).

The next 6 helical transmembrane spans lie at 34–54, 59–79, 113–133, 138–158, 171–191, and 194–214; these read IVMFPFIGLILGGVSGLIFIL, CGIPLAALFCILALALLTGGF, GGLALIFVLLAKILVVSELAL, MLAALAAACAAGRGSAVLLMY, VFIGKVSGRQTCITLGLAVIV, and VLLPGMQGLAAMVVTLAAIFI.

It belongs to the CobS family. Mg(2+) is required as a cofactor.

It localises to the cell inner membrane. The enzyme catalyses alpha-ribazole + adenosylcob(III)inamide-GDP = adenosylcob(III)alamin + GMP + H(+). It catalyses the reaction alpha-ribazole 5'-phosphate + adenosylcob(III)inamide-GDP = adenosylcob(III)alamin 5'-phosphate + GMP + H(+). The protein operates within cofactor biosynthesis; adenosylcobalamin biosynthesis; adenosylcobalamin from cob(II)yrinate a,c-diamide: step 7/7. Its function is as follows. Joins adenosylcobinamide-GDP and alpha-ribazole to generate adenosylcobalamin (Ado-cobalamin). Also synthesizes adenosylcobalamin 5'-phosphate from adenosylcobinamide-GDP and alpha-ribazole 5'-phosphate. The protein is Adenosylcobinamide-GDP ribazoletransferase of Salmonella schwarzengrund (strain CVM19633).